The primary structure comprises 578 residues: Arginine--tRNA ligase (578 aa).

The 'HIGH' region motif lies at 122 to 132; sequence PNVAKEMHVGH.

It belongs to the class-I aminoacyl-tRNA synthetase family. Monomer.

The protein localises to the cytoplasm. The enzyme catalyses tRNA(Arg) + L-arginine + ATP = L-arginyl-tRNA(Arg) + AMP + diphosphate. This Shigella sonnei (strain Ss046) protein is Arginine--tRNA ligase.